Consider the following 887-residue polypeptide: MGIVAETSQNGDTSLCSEKKFTVPQPPSIEEFGIVKPISRGAFGKVYLARRKNNSKLFAVKVVKKADMINKNMVQQVQAERDALALSKSPFIVHLYYSLQSANNIYLVMEYLIGGDVKSLLHIYGYFDEEMAVKYISEVAMALDYLHRHGIIHRDLKPDNMLISNKGHIKLTDFGLSKVTLKRELCMMDILTTPSMAKPKRDYSRTPGQVLSLISSLGFNTPAGGRTQGSLNQQTEGMRGNASTPLLMKKRESLVKGNKLMISCPEASLSSPSIPVKCLTPNLLKCRTQFATSSTSSQSRICLSSLESECGSPRWENCSQDAEAPPYFNSSRVKDSSSEQARSKKPTGSSASQNLKRLEFAFSPIVDRRTGKKAGFQDETGELSDTPLATLNAKGVIRKCLYENKAQEKPKDFDKTGQGELGKFTSSPDSPPWLANGSVAPIQFNDEEKTEKMGVKRNYDLVEKSPEQELLQDKKTNTDYKRGCAITDYPVSQSTGLTMEINSLFLSELRNSANKYASDRKSEDKYISAPRTLEKLDSGNPVAKNLLCELDDNCERDGEVSSTSEGEDRKERLNQDSSSTGMSVTENQIDRDLSHVDKSIKELSFEESQSENSEEITPDNKGIPFMAENDERVQSKYEPNTSILPDSLQNVLASPAPASAMTNPRRKPMVAFRSYNSPINVSNVSEPSKISMNSADKIHFSLECTGSFPMAVTPAQNKVQGLIETPYRTPKSVRRGGIQVDHERILGTPDYLAPELLLRKSHGPAVDWWALGVCLFEFLTGIPPFNDETPSQVFQNILNRDIPWPEEEEEVLSVNAQSAIEILLTIDPTKRAGLKDLKAHPLFHGMEWEELQYQPMSFIPQPDDETDTTYFEARNNAQHLKVSGFSL.

In terms of domain architecture, Protein kinase spans 32–843; that stretch reads FGIVKPISRG…LKDLKAHPLF (812 aa). Residues 38 to 46 and Lys-61 contribute to the ATP site; that span reads ISRGAFGKV. The active-site Proton acceptor is the Asp-155. A phosphothreonine; by CDK1; in vitro mark is found at Thr-221 and Thr-244. The segment at 321–353 is disordered; it reads DAEAPPYFNSSRVKDSSSEQARSKKPTGSSASQ. Ser-363 is subject to Phosphoserine; by CDK1; in vitro. The segment at 410–435 is disordered; the sequence is PKDFDKTGQGELGKFTSSPDSPPWLA. Position 465 is a phosphoserine; by CDK1; in vitro (Ser-465). Positions 556–624 are disordered; the sequence is RDGEVSSTSE…EITPDNKGIP (69 aa). Residues 575–587 are compositionally biased toward polar residues; that stretch reads QDSSSTGMSVTEN. Over residues 588 to 604 the composition is skewed to basic and acidic residues; that stretch reads QIDRDLSHVDKSIKELS. Residues 608–617 are compositionally biased toward acidic residues; the sequence is SQSENSEEIT. Phosphoserine; by CDK1; in vitro occurs at positions 654 and 677. At Thr-748 the chain carries Phosphothreonine; by CDK1. One can recognise an AGC-kinase C-terminal domain in the interval 844-887; that stretch reads HGMEWEELQYQPMSFIPQPDDETDTTYFEARNNAQHLKVSGFSL.

This sequence belongs to the protein kinase superfamily. AGC Ser/Thr protein kinase family. Interacts with arpp19 and ensa, leading to their phosphorylation. Post-translationally, phosphorylation at Thr-748 by CDK1 during M phase activates its kinase activity. Not active during other phases of the cell cycle. Has the ability to autophosphorylate.

It localises to the cytoplasm. The protein resides in the cytoskeleton. Its subcellular location is the microtubule organizing center. The protein localises to the centrosome. It is found in the nucleus. It carries out the reaction L-seryl-[protein] + ATP = O-phospho-L-seryl-[protein] + ADP + H(+). It catalyses the reaction L-threonyl-[protein] + ATP = O-phospho-L-threonyl-[protein] + ADP + H(+). Functionally, serine/threonine kinase that plays a key role in M phase by acting as a regulator of mitosis entry and maintenance. Acts by promoting the inactivation of protein phosphatase 2A (PP2A) during M phase: does not directly inhibit PP2A but acts by mediating phosphorylation and subsequent activation of arpp19 and ensa at 'Ser-67', 2 phosphatase inhibitors that specifically inhibit the ppp2r2d (PR55-delta) subunit of PP2A. Inactivation of PP2A during M phase is essential to keep cyclin-B1-CDK1 activity high. Following DNA damage, it is also involved in checkpoint recovery by being inhibited. This Xenopus laevis (African clawed frog) protein is Serine/threonine-protein kinase greatwall (mastl).